The sequence spans 230 residues: Large ribosomal subunit protein uL1 (230 aa).

Belongs to the universal ribosomal protein uL1 family. As to quaternary structure, part of the 50S ribosomal subunit.

In terms of biological role, binds directly to 23S rRNA. The L1 stalk is quite mobile in the ribosome, and is involved in E site tRNA release. Protein L1 is also a translational repressor protein, it controls the translation of the L11 operon by binding to its mRNA. The sequence is that of Large ribosomal subunit protein uL1 from Bacillus anthracis (strain A0248).